A 208-amino-acid chain; its full sequence is Uracil phosphoribosyltransferase (208 aa).

5-phospho-alpha-D-ribose 1-diphosphate contacts are provided by residues R78, R103, and D130–S138. Uracil-binding positions include I193 and G198 to A200. A 5-phospho-alpha-D-ribose 1-diphosphate-binding site is contributed by D199.

This sequence belongs to the UPRTase family. The cofactor is Mg(2+).

The enzyme catalyses UMP + diphosphate = 5-phospho-alpha-D-ribose 1-diphosphate + uracil. It participates in pyrimidine metabolism; UMP biosynthesis via salvage pathway; UMP from uracil: step 1/1. Its activity is regulated as follows. Allosterically activated by GTP. In terms of biological role, catalyzes the conversion of uracil and 5-phospho-alpha-D-ribose 1-diphosphate (PRPP) to UMP and diphosphate. The chain is Uracil phosphoribosyltransferase from Brucella ovis (strain ATCC 25840 / 63/290 / NCTC 10512).